The chain runs to 650 residues: NAC domain-containing protein 54 (650 aa).

The 151-residue stretch at 6–156 (LPPGFRFHPT…AYALCRVFKK (151 aa)) folds into the NAC domain. Residues 105–162 (VGMKKTLVYYRGRAPHGSRTDWVMHEYRLDERECETDTGLQDAYALCRVFKKTAPGPK) mediate DNA binding.

Expressed in leaves, roots and flowers.

It is found in the nucleus. Transcription factor that functions as a regulator of the jasmonate (JA) signaling pathway. May regulate the expression of genes encoding JA biosynthetic enzymes, such as lipoxygenase 7 (CM-LOX1), allene oxide synthase 2 (AOS2) and OPDA reductase 7 (OPR7). Involved in abscisic acid-induced leaf senescence. Activates the abscisic acid (ABA) signaling-associated gene ABI5 and the senescence-associated gene NYC1 by directly binding to the mitochondrial dysfunction motif (MDM) present in their promoters. Possesses transcriptional activator activity in yeast. Required for the multiplication of the rice dwarf virus (RDV). The chain is NAC domain-containing protein 54 from Oryza sativa subsp. japonica (Rice).